Reading from the N-terminus, the 362-residue chain is MKQPLISFKHVVKSYDDDVQVLKDVSFDIEEGKFYTLLGPSGCGKTTILNIIAGLSDATSGDVYFDGKRINDVPANKRQVNTVFQDYALFQHLNVYDNIAFGLKIKKVPADKIKEKVTEALRMVRLDGYEDRAISEMSGGQRQRVAIARAIVLDPKVLLLDEPLSALDQKLRAEMQYELRSLQKKLGITFIFITHDQEEALAMSDEIFVLNNGNIVQSGTPVDIYDEPINHYVADFIGESNIVNGIMIKDELVEFAGQQFPCVDGGMKPNEPVEVVIRPEDLVLTSPEKGQLKVKVDTQLFRGVHYEIRCTDALGNKWLVHSTKRAVPGENIGLSFGPEDIHVMRFNESEEDFDARLDSYND.

An ABC transporter domain is found at 6-237 (ISFKHVVKSY…PINHYVADFI (232 aa)). Residue 39 to 46 (GPSGCGKT) coordinates ATP.

The protein belongs to the ABC transporter superfamily. Spermidine/putrescine importer (TC 3.A.1.11.1) family. In terms of assembly, the complex is composed of two ATP-binding proteins (PotA), two transmembrane proteins (PotB and PotC) and a solute-binding protein (PotD).

The protein localises to the cell membrane. It carries out the reaction ATP + H2O + polyamine-[polyamine-binding protein]Side 1 = ADP + phosphate + polyamineSide 2 + [polyamine-binding protein]Side 1.. Functionally, part of the ABC transporter complex PotABCD involved in spermidine/putrescine import. Responsible for energy coupling to the transport system. The polypeptide is Spermidine/putrescine import ATP-binding protein PotA (Ligilactobacillus salivarius (strain UCC118) (Lactobacillus salivarius)).